A 207-amino-acid chain; its full sequence is Glutathione S-transferase P (207 aa).

The GST N-terminal domain occupies 1-78 (PPYTITYFPV…HLGRSFGLYG (78 aa)). Y3 carries the phosphotyrosine; by EGFR modification. Residues Y7, R13, W38, K42, and 49-50 (QL) contribute to the glutathione site. T59 carries the post-translational modification Phosphothreonine. 62-63 (QS) is a binding site for glutathione. The GST C-terminal domain maps to 80–201 (DQKEAALVDM…ASPEHVNRPI (122 aa)). Residues K100 and K113 each carry the N6-succinyllysine modification. At K125 the chain carries N6-acetyllysine.

It belongs to the GST superfamily. Pi family. In terms of assembly, homodimer. Interacts with CDK5.

It is found in the cytoplasm. Its subcellular location is the mitochondrion. The protein localises to the nucleus. It carries out the reaction RX + glutathione = an S-substituted glutathione + a halide anion + H(+). It catalyses the reaction prostaglandin J2 + glutathione = prostaglandin J2-S-(R)-glutathione. The enzyme catalyses prostaglandin J2 + glutathione = prostaglandin J2-S-(S)-glutathione. The catalysed reaction is prostaglandin A2 + glutathione = prostaglandin A2-S-(S)-glutathione. It carries out the reaction 11(S)-hydroxy-14(S),15(S)-epoxy-(5Z,8Z,12E)-eicosatrienoate + glutathione = (11S,15S)-dihydroxy-14(R)-S-glutathionyl-(5Z,8Z,12E)-eicosatrienoate. Conjugation of reduced glutathione to a wide number of exogenous and endogenous hydrophobic electrophiles. Involved in the formation of glutathione conjugates of both prostaglandin A2 (PGA2) and prostaglandin J2 (PGJ2). Participates in the formation of novel hepoxilin regioisomers. Negatively regulates CDK5 activity via p25/p35 translocation to prevent neurodegeneration. This Sus scrofa (Pig) protein is Glutathione S-transferase P (GSTP1).